A 571-amino-acid chain; its full sequence is Glutamate--tRNA ligase (571 aa).

The short motif at 114-124 (PNPNGPWHVGH) is the 'HIGH' region element. The segment at 431–453 (KPLAGGPESASPPLHPNDEDRGR) is disordered.

It belongs to the class-I aminoacyl-tRNA synthetase family. Glutamate--tRNA ligase type 2 subfamily.

The protein localises to the cytoplasm. It carries out the reaction tRNA(Glu) + L-glutamate + ATP = L-glutamyl-tRNA(Glu) + AMP + diphosphate. Its function is as follows. Catalyzes the attachment of glutamate to tRNA(Glu) in a two-step reaction: glutamate is first activated by ATP to form Glu-AMP and then transferred to the acceptor end of tRNA(Glu). In Natronomonas pharaonis (strain ATCC 35678 / DSM 2160 / CIP 103997 / JCM 8858 / NBRC 14720 / NCIMB 2260 / Gabara) (Halobacterium pharaonis), this protein is Glutamate--tRNA ligase.